A 244-amino-acid chain; its full sequence is NAD(P)H-quinone oxidoreductase subunit K (244 aa).

Residues Cys51, Cys52, Cys116, and Cys147 each coordinate [4Fe-4S] cluster.

The protein belongs to the complex I 20 kDa subunit family. As to quaternary structure, NDH-1 can be composed of about 15 different subunits; different subcomplexes with different compositions have been identified which probably have different functions. The cofactor is [4Fe-4S] cluster.

Its subcellular location is the cellular thylakoid membrane. The catalysed reaction is a plastoquinone + NADH + (n+1) H(+)(in) = a plastoquinol + NAD(+) + n H(+)(out). The enzyme catalyses a plastoquinone + NADPH + (n+1) H(+)(in) = a plastoquinol + NADP(+) + n H(+)(out). In terms of biological role, NDH-1 shuttles electrons from an unknown electron donor, via FMN and iron-sulfur (Fe-S) centers, to quinones in the respiratory and/or the photosynthetic chain. The immediate electron acceptor for the enzyme in this species is believed to be plastoquinone. Couples the redox reaction to proton translocation, and thus conserves the redox energy in a proton gradient. Cyanobacterial NDH-1 also plays a role in inorganic carbon-concentration. This chain is NAD(P)H-quinone oxidoreductase subunit K, found in Synechococcus sp. (strain JA-3-3Ab) (Cyanobacteria bacterium Yellowstone A-Prime).